Consider the following 362-residue polypeptide: Nicotinate-nucleotide--dimethylbenzimidazole phosphoribosyltransferase (362 aa).

E321 functions as the Proton acceptor in the catalytic mechanism.

It belongs to the CobT family.

It carries out the reaction 5,6-dimethylbenzimidazole + nicotinate beta-D-ribonucleotide = alpha-ribazole 5'-phosphate + nicotinate + H(+). It functions in the pathway nucleoside biosynthesis; alpha-ribazole biosynthesis; alpha-ribazole from 5,6-dimethylbenzimidazole: step 1/2. Its function is as follows. Catalyzes the synthesis of alpha-ribazole-5'-phosphate from nicotinate mononucleotide (NAMN) and 5,6-dimethylbenzimidazole (DMB). This Clostridium tetani (strain Massachusetts / E88) protein is Nicotinate-nucleotide--dimethylbenzimidazole phosphoribosyltransferase.